We begin with the raw amino-acid sequence, 134 residues long: D-ribose pyranase (134 aa).

The Proton donor role is filled by H20. Substrate is bound by residues D28, H101, and Y123 to N125.

Belongs to the RbsD / FucU family. RbsD subfamily. In terms of assembly, homodecamer.

It localises to the cytoplasm. It carries out the reaction beta-D-ribopyranose = beta-D-ribofuranose. It participates in carbohydrate metabolism; D-ribose degradation; D-ribose 5-phosphate from beta-D-ribopyranose: step 1/2. Functionally, catalyzes the interconversion of beta-pyran and beta-furan forms of D-ribose. The polypeptide is D-ribose pyranase (Pseudomonas fluorescens (strain ATCC BAA-477 / NRRL B-23932 / Pf-5)).